A 628-amino-acid chain; its full sequence is Basal cell adhesion molecule (628 aa).

An N-terminal signal peptide occupies residues 1 to 31 (MEPPDARAGARRAPRLLVLALLLAAPPGSKA). Ig-like V-type domains are found at residues 32-142 (EVRL…ARLK) and 150-253 (PEVS…RLDG). Topologically, residues 32-547 (EVRLSVPPLV…GTVAPQTSQA (516 aa)) are extracellular. Intrachain disulfides connect cysteine 53–cysteine 125, cysteine 172–cysteine 237, and cysteine 291–cysteine 337. Ig-like C2-type domains are found at residues 254 to 355 (PSFS…KTLE), 355 to 441 (ELRV…RSFR), and 448 to 538 (PELK…FHFG). 3 N-linked (GlcNAc...) asparagine glycosylation sites follow: asparagine 321, asparagine 330, and asparagine 378. 2 disulfide bridges follow: cysteine 384–cysteine 424 and cysteine 473–cysteine 522. A helical transmembrane segment spans residues 548–568 (GVAVMAVAISVALLLLVVAVF). Topologically, residues 569–628 (YCMRRKGRPGCCQWGEKGSPPPGEPKLSHSGSQRPEQTGLLMGSASGGAKHGSGGFGDEC) are cytoplasmic. Residues 580 to 628 (CQWGEKGSPPPGEPKLSHSGSQRPEQTGLLMGSASGGAKHGSGGFGDEC) form a disordered region. Serine 596, serine 598, serine 600, and serine 621 each carry phosphoserine. The span at 613-628 (ASGGAKHGSGGFGDEC) shows a compositional bias: gly residues.

In terms of assembly, homodimer. Interacts with ITGA4:ITGB1. Interacts with spectrins SPTA1 and SPTB1. In terms of processing, epinephrine-stimulated phosphorylation of Ser-621 by PKA enhances adhesion to laminin. Ser-621 can also be phosphorylated by AKT1.

Its subcellular location is the cell membrane. Functionally, transmembrane glycoprotein that functions as both a receptor and an adhesion molecule playing a crucial role in cell adhesion, motility, migration and invasion. Extracellular domain enables binding to extracellular matrix proteins, such as laminin, integrin and other ligands while its intracellular domain interacts with cytoskeletal proteins like hemoglobin, facilitating cell signal transduction. Serves as a receptor for laminin alpha-5/LAMA5 to promote cell adhesion. Mechanistically, JAK2 induces BCAM phosphorylation and activates its adhesion to laminin by stimulating a Rap1/AKT signaling pathway in the absence of EPOR. The polypeptide is Basal cell adhesion molecule (BCAM) (Bos taurus (Bovine)).